The sequence spans 389 residues: Phospho-N-acetylmuramoyl-pentapeptide-transferase (389 aa).

10 helical membrane-spanning segments follow: residues 25–45, 73–93, 97–117, 135–155, 190–210, 222–242, 258–278, 286–306, 311–331, and 366–386; these read RAVM…PWVI, TMGG…WGDL, FIWI…VDDY, FWQS…VSEA, ISYP…IVGA, GLVI…AYVM, GAGE…AFLW, VFMG…VAVI, IVLF…MLQV, and QVVV…LSTL.

The protein belongs to the glycosyltransferase 4 family. MraY subfamily. Mg(2+) serves as cofactor.

It is found in the cell inner membrane. The catalysed reaction is UDP-N-acetyl-alpha-D-muramoyl-L-alanyl-gamma-D-glutamyl-meso-2,6-diaminopimeloyl-D-alanyl-D-alanine + di-trans,octa-cis-undecaprenyl phosphate = di-trans,octa-cis-undecaprenyl diphospho-N-acetyl-alpha-D-muramoyl-L-alanyl-D-glutamyl-meso-2,6-diaminopimeloyl-D-alanyl-D-alanine + UMP. It participates in cell wall biogenesis; peptidoglycan biosynthesis. In terms of biological role, catalyzes the initial step of the lipid cycle reactions in the biosynthesis of the cell wall peptidoglycan: transfers peptidoglycan precursor phospho-MurNAc-pentapeptide from UDP-MurNAc-pentapeptide onto the lipid carrier undecaprenyl phosphate, yielding undecaprenyl-pyrophosphoryl-MurNAc-pentapeptide, known as lipid I. This is Phospho-N-acetylmuramoyl-pentapeptide-transferase from Burkholderia vietnamiensis (strain G4 / LMG 22486) (Burkholderia cepacia (strain R1808)).